Reading from the N-terminus, the 768-residue chain is P-selectin (768 aa).

The first 41 residues, 1–41 (MAGCPKGSWKPRLRSVVLGAAQLIWLSALISELVNRKKVAT), serve as a signal peptide directing secretion. Over 42 to 709 (WTYNYSTKAY…QAGTLTIQEA (668 aa)) the chain is Extracellular. Asn-45, Asn-54, and Asn-107 each carry an N-linked (GlcNAc...) asparagine glycan. Residues 58–158 (AFCKRHFTDL…PCFKRKRALC (101 aa)) form the C-type lectin domain. 20 cysteine pairs are disulfide-bonded: Cys-60–Cys-158, Cys-131–Cys-150, Cys-168–Cys-183, Cys-185–Cys-194, Cys-200–Cys-244, Cys-230–Cys-257, Cys-262–Cys-306, Cys-292–Cys-319, Cys-324–Cys-368, Cys-354–Cys-381, Cys-386–Cys-430, Cys-416–Cys-443, Cys-448–Cys-492, Cys-478–Cys-505, Cys-510–Cys-554, Cys-540–Cys-567, Cys-580–Cys-624, Cys-610–Cys-637, Cys-642–Cys-686, and Cys-672–Cys-699. 3 residues coordinate Ca(2+): Glu-121, Asn-123, and Asn-124. Asn-123 is an a carbohydrate binding site. Positions 133 and 146 each coordinate a carbohydrate. Asn-146 and Asp-147 together coordinate Ca(2+). Positions 159–195 (YTASCQDMSCNSQGERIETIGSYTCSCYPGFYGPECE) constitute an EGF-like domain. 8 consecutive Sushi domains span residues 198–259 (QECG…QCKA), 260–321 (VQCQ…TCEA), 322–383 (IACE…VCEA), 384–445 (LQCQ…ECQA), 446–507 (VSCT…MCEA), 508–569 (IKCP…TCKG), 578–639 (VRCP…VCRA), and 640–701 (VKCS…TCQA). Asn-212 carries an N-linked (GlcNAc...) asparagine glycan. N-linked (GlcNAc...) asparagine glycosylation occurs at Asn-347. Asn-456 carries N-linked (GlcNAc...) asparagine glycosylation. N-linked (GlcNAc...) asparagine glycosylation is present at Asn-603. N-linked (GlcNAc...) asparagine glycosylation is found at Asn-654, Asn-661, and Asn-679. A helical membrane pass occupies residues 710 to 733 (LTYLGGALASTSGLAVGGTLLALL). Residues 734 to 768 (RKRLRKKDDGKCPLNPHSHLGTYGVFTNAAYDPTP) are Cytoplasmic-facing. Cys-745 carries S-palmitoyl cysteine; alternate lipidation. Cys-745 carries the S-stearoyl cysteine; alternate lipid modification. The short motif at 756–759 (YGVF) is the Endocytosis signal element. An interaction with SNX17 region spans residues 759–768 (FTNAAYDPTP).

Belongs to the selectin/LECAM family. As to quaternary structure, interacts with SNX17. Interacts with SELPLG/PSGL1 and PODXL2 and mediates neutrophil adhesion and leukocyte rolling. This interaction requires the sialyl-Lewis X epitope of SELPLG and PODXL2, and specific tyrosine sulfation on SELPLG. Interacts (via C-type lectin domain) with alpha-IIb/beta3 integrin ITGA2B:ITGB3 and alpha-V/beta-3 integrin ITGAV:ITGB3. Interacts with alpha5/beta1 integrin ITGA5:ITGB1 and alpha4/beta1 integrin ITGA4:ITGB. As to expression, not detected in the absence of exposure to lipopolysaccharide (LPS). Detected only after exposure to lipopolysaccharide (LPS) in the tissues examined: spleen, lung, brain, liver, heart, kidney, thymus and small intestine.

It localises to the cell membrane. In terms of biological role, ca(2+)-dependent receptor for myeloid cells that binds to carbohydrates on neutrophils and monocytes. Mediates the interaction of activated endothelial cells or platelets with leukocytes. The ligand recognized is sialyl-Lewis X. Mediates rapid rolling of leukocyte rolling over vascular surfaces during the initial steps in inflammation through interaction with SELPLG. Mediates cell-cell interactions and cell adhesion via the interaction with integrin alpha-IIb/beta3 (ITGA2B:ITGB3) and integrin alpha-V/beta-3 (ITGAV:ITGB3). This Rattus norvegicus (Rat) protein is P-selectin (Selp).